A 244-amino-acid polypeptide reads, in one-letter code: Ribonuclease P protein component 3 (244 aa).

Belongs to the eukaryotic/archaeal RNase P protein component 3 family. In terms of assembly, consists of a catalytic RNA component and at least 4-5 protein subunits.

The protein resides in the cytoplasm. It catalyses the reaction Endonucleolytic cleavage of RNA, removing 5'-extranucleotides from tRNA precursor.. Part of ribonuclease P, a protein complex that generates mature tRNA molecules by cleaving their 5'-ends. The chain is Ribonuclease P protein component 3 from Methanopyrus kandleri (strain AV19 / DSM 6324 / JCM 9639 / NBRC 100938).